A 254-amino-acid chain; its full sequence is Cdc42 effector protein 3 (254 aa).

One can recognise a CRIB domain in the interval 31–45; the sequence is ISPPLGDFRHTIHIG. Tyrosine 63 bears the Phosphotyrosine mark. A phosphoserine mark is found at serine 89, serine 108, and serine 144. Positions 165-205 are disordered; it reads VHQGDTSWGSSGSGSQSSQGRDSHSSSLSEQSSDWPADDMF. Residues 171-197 show a composition bias toward low complexity; sequence SWGSSGSGSQSSQGRDSHSSSLSEQSS.

This sequence belongs to the BORG/CEP family. Interacts with RHOQ and CDC42, in a GTP-dependent manner, and with SEPT7.

Its subcellular location is the endomembrane system. It is found in the cytoplasm. It localises to the cytoskeleton. Its function is as follows. Probably involved in the organization of the actin cytoskeleton. May act downstream of CDC42 to induce actin filament assembly leading to cell shape changes. Induces pseudopodia formation in fibroblasts. This Mus musculus (Mouse) protein is Cdc42 effector protein 3 (Cdc42ep3).